The primary structure comprises 107 residues: Thioredoxin (107 aa).

The region spanning 2-107 is the Thioredoxin domain; that stretch reads SATPQVSDAS…TLASTLEKYL (106 aa). A disulfide bond links C32 and C35.

The protein belongs to the thioredoxin family.

Its function is as follows. Component of the thioredoxin-thioredoxin reductase system. Participates in various redox reactions through the reversible oxidation of its active center dithiol to a disulfide and catalyzes dithiol-disulfide exchange reactions. The chain is Thioredoxin (trxA) from Synechocystis sp. (strain ATCC 27184 / PCC 6803 / Kazusa).